A 266-amino-acid chain; its full sequence is Apoptosis regulator ced-9 (266 aa).

The disordered stretch occupies residues 1-58 (MVDSMDMANSSQNTFRRRTMATSEMREFLSTKDAEPNNFGMQTIPESPTPSTPTRRMS). Residues 24–35 (EMREFLSTKDAE) are compositionally biased toward basic and acidic residues. The BH4 signature appears at 75-94 (IQGFVVDYFTYRIAQNGLDW). The short motif at 156–174 (NTPCPMSYGRLIGLISFGG) is the BH1 element. The BH2 motif lies at 208 to 223 (SWKEHNRSWADFMKLG).

The protein belongs to the Bcl-2 family. As to quaternary structure, interacts with asymmetric homodimer ced-4; the interaction sequesters ced-4. Interacts with egl-1; the interaction results in ced-4 release. Interacts with dre-1; the interaction inhibits ced-9 activity, either directly or indirectly. Interacts with dct-1. May form a complex composed of ced-9, ced-4 and mac-1.

It localises to the perikaryon. It is found in the synapse. The protein resides in the endomembrane system. Its subcellular location is the mitochondrion membrane. In terms of biological role, plays a major role in programmed cell death (PCD, apoptosis). egl-1 binds to and directly inhibits the activity of ced-9, releasing the cell death activator ced-4 from a ced-9/ced-4 containing protein complex and allowing ced-4 to activate the cell-killing caspase ced-3. During larval development, required for the elimination of transient presynaptic components downstream of egl-1 and upstream of ced-4 and ced-3 apoptotic pathway. The protein is Apoptosis regulator ced-9 (ced-9) of Caenorhabditis briggsae.